Reading from the N-terminus, the 1150-residue chain is Fl(2)d-associated complex component (1150 aa).

The span at 1-10 shows a compositional bias: basic and acidic residues; sequence MEKKAKESLR. 4 disordered regions span residues 1–444, 477–710, 833–914, and 1034–1053; these read MEKK…EEER, QGRE…PPPL, ASED…MDTN, and KEQG…AKIP. The segment covering 11–20 has biased composition (basic residues); the sequence is RYKKAARHSA. The span at 21-44 shows a compositional bias: low complexity; sequence THSSSSDSTSDSDSGSSSYSSTDS. Over residues 47 to 69 the composition is skewed to gly residues; the sequence is GVGGVGVGVGVPGGAGGPGGSGS. The segment covering 72–97 has biased composition (basic residues); that stretch reads GHPHTHGHGHHPRSAERHHRKKKSSR. Residues 98–107 are compositionally biased toward low complexity; that stretch reads RGGSSSGDEP. Basic residues-rich tracts occupy residues 110 to 144 and 162 to 175; these read SRRK…KKRA and AKLK…RLRA. The stretch at 122-147 forms a coiled coil; the sequence is KKLVAKRNHIKRKLKEARLKKRAAAA. The segment covering 176 to 199 has biased composition (basic and acidic residues); it reads ASKEQRERDKLRVVQRDRERDHHR. Residues 202-215 show a composition bias toward low complexity; the sequence is SSRSPPSSSTTTTT. A coiled-coil region spans residues 269-347; that stretch reads PSLERERERE…KLRRQEEEEG (79 aa). Composition is skewed to basic and acidic residues over residues 270-414, 428-444, and 492-529; these read SLER…DEMR, YAPR…EEER, and PDER…PEWE. Positions 537–558 are enriched in gly residues; the sequence is AGGGPGGPSGTPGRPGGFVGGP. 2 stretches are compositionally biased toward basic and acidic residues: residues 589–611 and 630–640; these read ERER…DRPD and WLEHDQREKPR. A compositionally biased stretch (pro residues) spans 660–669; it reads PPAPSHPHPA. The segment covering 693–702 has biased composition (basic and acidic residues); sequence GHGDHGERPG. Low complexity predominate over residues 851 to 861; sequence QSLNLNQSLSS. Residues 879–889 are compositionally biased toward acidic residues; the sequence is ELSEISDSDDD. Positions 890–903 are enriched in basic and acidic residues; it reads ILNKTDKVRPKNEL. Acidic residues predominate over residues 905–914; it reads TETEQEMDTN.

This sequence belongs to the ZC3H13 family. In terms of assembly, component of the WMM complex, a N6-methyltransferase complex composed of a catalytic subcomplex, named MAC, and of an associated subcomplex, named MACOM. The MAC subcomplex is composed of Ime4/Mettl3 and Mettl14. The MACOM subcomplex is composed of fl(2)d, Flacc/Xio, Hakai, vir, and, in some cases of nito. In terms of tissue distribution, widely expressed during embryogenesis but shows enrichment in the neuroectoderm.

It is found in the nucleus. Its function is as follows. Associated component of the WMM complex, a complex that mediates N6-methyladenosine (m6A) methylation of mRNAs, a modification that plays a role in the efficiency of mRNA splicing and is required for sex determination. In the WMM complex, acts as a key regulator of m6A methylation by bridging fl(2)d to the RNA-binding component nito. Required for sex determination and dosage compensation via Sxl alternative splicing: m6A methylation acts as a key regulator of Sxl pre-mRNA and promotes female-specific alternative splicing of Sxl, which determines female physiognomy. The polypeptide is Fl(2)d-associated complex component (Drosophila melanogaster (Fruit fly)).